Here is a 924-residue protein sequence, read N- to C-terminus: Phosphatidate phosphatase LPIN1 (924 aa).

An N-LIP region spans residues 1-108 (MNYVGQLAGQ…IPMYLATSPI (108 aa)). Residues serine 106 and serine 150 each carry the phosphoserine modification. 2 disordered regions span residues 133–248 (PTTA…DCQR) and 269–297 (FHASESPSGSRPSTPKSDSELVSKSADRL). Basic residues predominate over residues 152–161 (GKKRRKRRRK). A Nuclear localization signal motif is present at residues 153–158 (KKRRKR). The segment covering 162–172 (AQLDNLKRDDN) has biased composition (basic and acidic residues). Residues 176–193 (SEDEDMFPIEMSSDEDTA) show a composition bias toward acidic residues. Composition is skewed to polar residues over residues 218–229 (PSISTHPQSASY) and 273–284 (ESPSGSRPSTPK). Phosphoserine occurs at positions 285, 287, and 293. Residues 285-297 (SDSELVSKSADRL) show a composition bias toward basic and acidic residues. At threonine 298 the chain carries Phosphothreonine. Disordered regions lie at residues 314–426 (QAAK…SRHL) and 446–490 (LYFP…STSD). Serine 328 is subject to Phosphoserine. Residues 343 to 358 (AIHSESSDTFSDQSPT) are compositionally biased toward polar residues. A Phosphoserine modification is found at serine 392. The span at 404 to 413 (NTAQSSSKTD) shows a compositional bias: polar residues. Lysine 459 carries the post-translational modification N6-acetyllysine. Polar residues predominate over residues 461-476 (ASDNGARSANQSPQSV). 3 positions are modified to phosphoserine: serine 468, serine 472, and serine 483. Glycyl lysine isopeptide (Lys-Gly) (interchain with G-Cter in SUMO) cross-links involve residues lysine 599 and lysine 629. Positions 627 to 649 (RIKHESSSSDEEHAAAKPSGSSH) are disordered. The segment covering 628–641 (IKHESSSSDEEHAA) has biased composition (basic and acidic residues). Lysine 629 bears the N6-acetyllysine mark. A phosphoserine mark is found at serine 634 and serine 635. Positions 658–864 (YKKTLRLTSE…VNPKGELVQE (207 aa)) are C-LIP. The DXDXT motif signature appears at 712–716 (DIDGT). The LXXIL motif signature appears at 723-727 (LGHIL). Serine 921 and serine 923 each carry phosphoserine.

The protein belongs to the lipin family. As to quaternary structure, interacts (via LXXIL motif) with PPARA. Interacts with PPARGC1A. Interaction with PPARA and PPARGC1A leads to the formation of a complex that modulates gene transcription. Interacts with MEF2C. Mg(2+) is required as a cofactor. Phosphorylated at multiple sites in response to insulin. Phosphorylation is controlled by the mTOR signaling pathway. Phosphorylation is decreased by epinephrine. Phosphorylation may not directly affect the catalytic activity but may regulate the localization. Dephosphorylated by the CTDNEP1-CNEP1R1 complex. In terms of processing, phosphorylated at multiple sites by mTOR in response to insulin, leading to its inactivation. Phosphorylation does not affect the catalytic activity but regulates the localization. Phosphorylation is decreased by epinephrine. Dephosphorylated by the CTDNEP1-CNEP1R1 complex. Dephosphorylation following mTOR inhibition promotes its activity. Post-translationally, sumoylation is important in brain and is marginal in other tissues. Sumoylation facilitates nuclear localization of isoform 2 in neuronals cells and its transcriptional coactivator activity. Acetylation at Lys-459 and Lys-629 by KAT5 in response to fatty acids promotes translocation to the endoplasmic reticulum and synthesis of diacylglycerol. In terms of tissue distribution, specifically expressed in skeletal muscle. Also expressed prominently in adipose tissue, and testis. Lower expression also detected in kidney, lung, brain and liver. As to expression, predominant isoform in the liver. Predominant isoform in the brain.

The protein localises to the mitochondrion outer membrane. The protein resides in the cytoplasm. Its subcellular location is the nucleus membrane. It localises to the nucleus. It is found in the endoplasmic reticulum membrane. The catalysed reaction is a 1,2-diacyl-sn-glycero-3-phosphate + H2O = a 1,2-diacyl-sn-glycerol + phosphate. It catalyses the reaction 1-octadecanoyl-2-(4Z,7Z,10Z,13Z,16Z,19Z-docosahexaenoyl)-sn-glycero-3-phosphate + H2O = 1-octadecanoyl-2-(4Z,7Z,10Z,13Z,16Z,19Z-docosahexaenoyl)-sn-glycerol + phosphate. The enzyme catalyses 1-octadecanoyl-2-(5Z,8Z,11Z,14Z-eicosatetraenoyl)-sn-glycero-3-phosphate + H2O = 1-octadecanoyl-2-(5Z,8Z,11Z,14Z-eicosatetraenoyl)-sn-glycerol + phosphate. It carries out the reaction 1-octadecanoyl-2-(9Z,12Z-octadecadienoyl)-sn-glycero-3-phosphate + H2O = 1-octadecanoyl-2-(9Z,12Z)-octadecadienoyl-sn-glycerol + phosphate. The catalysed reaction is 1-octadecanoyl-2-(9Z-octadecenoyl)-sn-glycero-3-phosphate + H2O = 1-octadecanoyl-2-(9Z-octadecenoyl)-sn-glycerol + phosphate. It catalyses the reaction 1-hexadecanoyl-2-(4Z,7Z,10Z,13Z,16Z,19Z-docosahexaenoyl)-sn-glycero-3-phosphate + H2O = 1-hexadecanoyl-2-(4Z,7Z,10Z,13Z,16Z,19Z-docosahexaenoyl)-sn-glycerol + phosphate. The enzyme catalyses 1,2-dioctadecanoyl-sn-glycero-3-phosphate + H2O = 1,2-dioctadecanoyl-sn-glycerol + phosphate. It carries out the reaction 1-hexadecanoyl-2-(5Z,8Z,11Z,14Z-eicosatetraenoyl)-sn-glycero-3-phosphate + H2O = 1-hexadecanoyl-2-(5Z,8Z,11Z,14Z-eicosatetraenoyl)-sn-glycerol + phosphate. The catalysed reaction is 1-hexadecanoyl-2-(9Z,12Z-octadecadienoyl)-sn-glycero-3-phosphate + H2O = 1-hexadecanoyl-2-(9Z,12Z-octadecadienoyl)-sn-glycerol + phosphate. It catalyses the reaction 1-hexadecanoyl-2-(9Z-octadecenoyl)-sn-glycero-3-phosphate + H2O = 1-hexadecanoyl-2-(9Z-octadecenoyl)-sn-glycerol + phosphate. The enzyme catalyses 1,2-di-(4Z,7Z,10Z,13Z,16Z,19Z-docosahexaenoyl)-sn-glycero-3-phosphate + H2O = 1,2-di-(4Z,7Z,10Z,13Z,16Z,19Z-docosahexaenoyl)-sn-glycerol + phosphate. It carries out the reaction 1,2-di-(5Z,8Z,11Z,14Z)-eicosatetraenoyl-sn-glycero-3-phosphate + H2O = 1,2-di-(5Z,8Z,11Z,14Z)-eicosatetraenoyl-sn-glycerol + phosphate. The catalysed reaction is 1,2-di-(9Z,12Z-octadecadienoyl)-sn-glycero-3-phosphate + H2O = 1,2-di-(9Z,12Z-octadecadienoyl)-sn-glycerol + phosphate. It catalyses the reaction 1,2-di-(9Z-octadecenoyl)-sn-glycero-3-phosphate + H2O = 1,2-di-(9Z-octadecenoyl)-sn-glycerol + phosphate. The enzyme catalyses 1,2-dihexadecanoyl-sn-glycero-3-phosphate + H2O = 1,2-dihexadecanoyl-sn-glycerol + phosphate. Inhibited by N-ethylmaleimide treatment. In terms of biological role, acts as a magnesium-dependent phosphatidate phosphatase enzyme which catalyzes the conversion of phosphatidic acid to diacylglycerol during triglyceride, phosphatidylcholine and phosphatidylethanolamine biosynthesis and therefore controls the metabolism of fatty acids at different levels. Is involved in adipocyte differentiation. Also acts as nuclear transcriptional coactivator for PPARGC1A/PPARA regulatory pathway to modulate lipid metabolism gene expression. Recruited at the mitochondrion outer membrane and is involved in mitochondrial fission by converting phosphatidic acid to diacylglycerol. The sequence is that of Phosphatidate phosphatase LPIN1 (Lpin1) from Mus musculus (Mouse).